Consider the following 433-residue polypeptide: Serine hydroxymethyltransferase (433 aa).

Residues Leu132 and 136-138 each bind (6S)-5,6,7,8-tetrahydrofolate; that span reads GHL. Lys241 bears the N6-(pyridoxal phosphate)lysine mark.

It belongs to the SHMT family. Homodimer. It depends on pyridoxal 5'-phosphate as a cofactor.

It localises to the cytoplasm. It carries out the reaction (6R)-5,10-methylene-5,6,7,8-tetrahydrofolate + glycine + H2O = (6S)-5,6,7,8-tetrahydrofolate + L-serine. It functions in the pathway one-carbon metabolism; tetrahydrofolate interconversion. Its pathway is amino-acid biosynthesis; glycine biosynthesis; glycine from L-serine: step 1/1. Its function is as follows. Catalyzes the reversible interconversion of serine and glycine with tetrahydrofolate (THF) serving as the one-carbon carrier. This reaction serves as the major source of one-carbon groups required for the biosynthesis of purines, thymidylate, methionine, and other important biomolecules. Also exhibits THF-independent aldolase activity toward beta-hydroxyamino acids, producing glycine and aldehydes, via a retro-aldol mechanism. The protein is Serine hydroxymethyltransferase of Rhodopseudomonas palustris (strain HaA2).